The sequence spans 466 residues: DNA repair protein RadA (466 aa).

The C4-type zinc-finger motif lies at 12 to 29 (CSECQHVAPKWVGRCANC). 100–107 (GDPGVGKS) is a binding site for ATP. The RadA KNRFG motif signature appears at 261–265 (KNRFG). The segment at 359-466 (DLYLSTVGGM…MREIAIAGAQ (108 aa)) is lon-protease-like.

It belongs to the RecA family. RadA subfamily. As to quaternary structure, interacts with DisA.

In terms of biological role, DNA-dependent ATPase involved in processing of recombination intermediates, plays a role in repairing DNA breaks. Stimulates the branch migration of RecA-mediated strand transfer reactions, allowing the 3' invading strand to extend heteroduplex DNA faster. Binds ssDNA in the presence of ADP but not other nucleotides, has ATPase activity that is stimulated by ssDNA and various branched DNA structures, but inhibited by SSB. Does not have RecA's homology-searching function. Also inhibits the diadenylate cyclase activity of DisA. This Mycolicibacterium smegmatis (strain ATCC 700084 / mc(2)155) (Mycobacterium smegmatis) protein is DNA repair protein RadA.